The chain runs to 146 residues: Phospholipase A2, membrane associated (146 aa).

Residues 1–21 (MKVLLLLAVVIMAFGSIQVQG) form the signal peptide. 7 disulfide bridges follow: Cys47–Cys139, Cys49–Cys65, Cys64–Cys119, Cys70–Cys146, Cys71–Cys112, Cys80–Cys105, and Cys98–Cys110. The Ca(2+) site is built by His48, Gly50, and Gly52. Residue His68 is part of the active site. Residue Asp69 coordinates Ca(2+). Asp113 is an active-site residue.

Belongs to the phospholipase A2 family. Requires Ca(2+) as cofactor.

It localises to the secreted. The protein localises to the cell membrane. The protein resides in the mitochondrion outer membrane. The catalysed reaction is a 1,2-diacyl-sn-glycero-3-phosphoethanolamine + H2O = a 1-acyl-sn-glycero-3-phosphoethanolamine + a fatty acid + H(+). It carries out the reaction 1-hexadecanoyl-2-(9Z-octadecenoyl)-sn-glycero-3-phosphoethanolamine + H2O = 1-hexadecanoyl-sn-glycero-3-phosphoethanolamine + (9Z)-octadecenoate + H(+). The enzyme catalyses 1-hexadecanoyl-2-(9Z,12Z-octadecadienoyl)-sn-glycero-3-phosphoethanolamine + H2O = 1-hexadecanoyl-sn-glycero-3-phosphoethanolamine + (9Z,12Z)-octadecadienoate + H(+). It catalyses the reaction 1-hexadecanoyl-2-(5Z,8Z,11Z,14Z-eicosatetraenoyl)-sn-glycero-3-phosphoethanolamine + H2O = 1-hexadecanoyl-sn-glycero-3-phosphoethanolamine + (5Z,8Z,11Z,14Z)-eicosatetraenoate + H(+). The catalysed reaction is N-hexadecanoyl-1,2-di-(9Z-octadecenoyl)-sn-glycero-3-phosphoethanolamine + H2O = N-hexadecanoyl-1-(9Z-octadecenoyl)-sn-glycero-3-phosphoethanolamine + (9Z)-octadecenoate + H(+). It carries out the reaction 1,2-dihexadecanoyl-sn-glycero-3-phospho-(1'-sn-glycerol) + H2O = 1-hexadecanoyl-sn-glycero-3-phospho-(1'-sn-glycerol) + hexadecanoate + H(+). The enzyme catalyses 1-hexadecanoyl-2-(9Z-octadecenoyl)-sn-glycero-3-phosphoglycerol + H2O = 1-hexadecanoyl-sn-glycero-3-phosphoglycerol + (9Z)-octadecenoate + H(+). It catalyses the reaction 1-hexadecanoyl-2-(9Z-octadecenoyl)-sn-glycero-3-phospho-(1'-sn-glycerol) + H2O = 1-hexadecanoyl-sn-glycero-3-phospho-(1'-sn-glycerol) + (9Z)-octadecenoate + H(+). The catalysed reaction is a 1,2-diacyl-sn-glycero-3-phosphocholine + H2O = a 1-acyl-sn-glycero-3-phosphocholine + a fatty acid + H(+). It carries out the reaction 1,2-dihexadecanoyl-sn-glycero-3-phosphocholine + H2O = 1-hexadecanoyl-sn-glycero-3-phosphocholine + hexadecanoate + H(+). The enzyme catalyses 1-hexadecanoyl-2-(9Z-octadecenoyl)-sn-glycero-3-phosphocholine + H2O = 1-hexadecanoyl-sn-glycero-3-phosphocholine + (9Z)-octadecenoate + H(+). It catalyses the reaction 1-hexadecanoyl-2-(9Z,12Z-octadecadienoyl)-sn-glycero-3-phosphocholine + H2O = (9Z,12Z)-octadecadienoate + 1-hexadecanoyl-sn-glycero-3-phosphocholine + H(+). The catalysed reaction is 1-hexadecanoyl-2-(4Z,7Z,10Z,13Z,16Z,19Z-docosahexaenoyl)-sn-glycero-3-phosphocholine + H2O = (4Z,7Z,10Z,13Z,16Z,19Z)-docosahexaenoate + 1-hexadecanoyl-sn-glycero-3-phosphocholine + H(+). In terms of biological role, secretory calcium-dependent phospholipase A2 that primarily targets extracellular phospholipids with implications in host antimicrobial defense, inflammatory response and tissue regeneration. Hydrolyzes the ester bond of the fatty acyl group attached at sn-2 position of phospholipids (phospholipase A2 activity) with preference for phosphatidylethanolamines and phosphatidylglycerols over phosphatidylcholines. Contributes to lipid remodeling of cellular membranes and generation of lipid mediators involved in pathogen clearance. Displays bactericidal activity against Gram-positive bacteria by directly hydrolyzing phospholipids of the bacterial membrane. Upon sterile inflammation, targets membrane phospholipids of extracellular mitochondria released from activated platelets, generating free unsaturated fatty acids such as arachidonate that is used by neighboring leukocytes to synthesize inflammatory eicosanoids such as leukotrienes. Simultaneously, by compromising mitochondrial membrane integrity, promotes the release in circulation of potent damage-associated molecular pattern molecules that activate the innate immune response. Plays a stem cell regulator role in the intestinal crypt. Within intracellular compartment mediates Paneth cell differentiation and its stem cell supporting functions by inhibiting Wnt signaling pathway in intestinal stem cell (ICS). Secreted in the intestinal lumen upon inflammation, acts in an autocrine way and promotes prostaglandin E2 synthesis that stimulates Wnt signaling pathway in ICS cells and tissue regeneration. May play a role in the biosynthesis of N-acyl ethanolamines that regulate energy metabolism and inflammation. Hydrolyzes N-acyl phosphatidylethanolamines to N-acyl lysophosphatidylethanolamines, which are further cleaved by a lysophospholipase D to release N-acyl ethanolamines. Independent of its catalytic activity, acts as a ligand for integrins. Binds to and activates integrins ITGAV:ITGB3, ITGA4:ITGB1 and ITGA5:ITGB1. Binds to a site (site 2) which is distinct from the classical ligand-binding site (site 1) and induces integrin conformational changes and enhanced ligand binding to site 1. Induces cell proliferation in an integrin-dependent manner. This is Phospholipase A2, membrane associated (Pla2g2a) from Rattus norvegicus (Rat).